Here is a 443-residue protein sequence, read N- to C-terminus: Exodeoxyribonuclease 7 large subunit (443 aa).

This sequence belongs to the XseA family. As to quaternary structure, heterooligomer composed of large and small subunits.

Its subcellular location is the cytoplasm. It catalyses the reaction Exonucleolytic cleavage in either 5'- to 3'- or 3'- to 5'-direction to yield nucleoside 5'-phosphates.. Its function is as follows. Bidirectionally degrades single-stranded DNA into large acid-insoluble oligonucleotides, which are then degraded further into small acid-soluble oligonucleotides. This chain is Exodeoxyribonuclease 7 large subunit, found in Vibrio campbellii (strain ATCC BAA-1116).